The primary structure comprises 238 residues: tRNA1(Val) (adenine(37)-N6)-methyltransferase (238 aa).

It belongs to the methyltransferase superfamily. tRNA (adenine-N(6)-)-methyltransferase family.

It is found in the cytoplasm. The catalysed reaction is adenosine(37) in tRNA1(Val) + S-adenosyl-L-methionine = N(6)-methyladenosine(37) in tRNA1(Val) + S-adenosyl-L-homocysteine + H(+). In terms of biological role, specifically methylates the adenine in position 37 of tRNA(1)(Val) (anticodon cmo5UAC). The polypeptide is tRNA1(Val) (adenine(37)-N6)-methyltransferase (Shewanella sp. (strain W3-18-1)).